Consider the following 273-residue polypeptide: Dermonecrotic toxin LspaSicTox-alphaIA1iii (273 aa).

Residue His5 is part of the active site. Positions 25 and 27 each coordinate Mg(2+). His41 (nucleophile) is an active-site residue. 2 disulfides stabilise this stretch: Cys45–Cys51 and Cys47–Cys190. Asp85 contributes to the Mg(2+) binding site.

It belongs to the arthropod phospholipase D family. Class II subfamily. Mg(2+) is required as a cofactor. Expressed by the venom gland.

It localises to the secreted. The enzyme catalyses an N-(acyl)-sphingosylphosphocholine = an N-(acyl)-sphingosyl-1,3-cyclic phosphate + choline. It catalyses the reaction an N-(acyl)-sphingosylphosphoethanolamine = an N-(acyl)-sphingosyl-1,3-cyclic phosphate + ethanolamine. The catalysed reaction is a 1-acyl-sn-glycero-3-phosphocholine = a 1-acyl-sn-glycero-2,3-cyclic phosphate + choline. It carries out the reaction a 1-acyl-sn-glycero-3-phosphoethanolamine = a 1-acyl-sn-glycero-2,3-cyclic phosphate + ethanolamine. Dermonecrotic toxins cleave the phosphodiester linkage between the phosphate and headgroup of certain phospholipids (sphingolipid and lysolipid substrates), forming an alcohol (often choline) and a cyclic phosphate. This toxin acts on sphingomyelin (SM). It may also act on ceramide phosphoethanolamine (CPE), lysophosphatidylcholine (LPC) and lysophosphatidylethanolamine (LPE), but not on lysophosphatidylserine (LPS), and lysophosphatidylglycerol (LPG). It acts by transphosphatidylation, releasing exclusively cyclic phosphate products as second products. Induces dermonecrosis, hemolysis, increased vascular permeability, edema, inflammatory response, and platelet aggregation. The sequence is that of Dermonecrotic toxin LspaSicTox-alphaIA1iii from Loxosceles spadicea (Recluse spider).